Here is a 354-residue protein sequence, read N- to C-terminus: 5,10-methenyltetrahydromethanopterin hydrogenase (354 aa).

This sequence belongs to the HMD family.

The enzyme catalyses 5,10-methenyl-5,6,7,8-tetrahydromethanopterin + H2 = 5,10-methylenetetrahydromethanopterin + H(+). It participates in one-carbon metabolism; methanogenesis from CO(2); 5,10-methylene-5,6,7,8-tetrahydromethanopterin from 5,10-methenyl-5,6,7,8-tetrahydromethanopterin (hydrogen route): step 1/1. Its function is as follows. Catalyzes the reversible reduction of methenyl-H(4)MPT(+) to methylene-H(4)MPT. In Methanococcus maripaludis (strain C7 / ATCC BAA-1331), this protein is 5,10-methenyltetrahydromethanopterin hydrogenase.